The following is a 203-amino-acid chain: LexA repressor (203 aa).

The H-T-H motif DNA-binding region spans 28-48 (VRELCDELGFKSPNTAHFHLK). Catalysis depends on for autocatalytic cleavage activity residues Ser122 and Lys159.

The protein belongs to the peptidase S24 family. As to quaternary structure, homodimer.

The enzyme catalyses Hydrolysis of Ala-|-Gly bond in repressor LexA.. Functionally, represses a number of genes involved in the response to DNA damage (SOS response), including recA and lexA. In the presence of single-stranded DNA, RecA interacts with LexA causing an autocatalytic cleavage which disrupts the DNA-binding part of LexA, leading to derepression of the SOS regulon and eventually DNA repair. This Desulfatibacillum aliphaticivorans protein is LexA repressor.